The primary structure comprises 372 residues: Glutamate 5-kinase (372 aa).

K14 is an ATP binding site. Residues S54, D141, and N153 each coordinate substrate. 173–174 (TD) serves as a coordination point for ATP. One can recognise a PUA domain in the interval 280 to 358 (RGTLVLDDGA…ESIVRELGYM (79 aa)).

The protein belongs to the glutamate 5-kinase family.

The protein localises to the cytoplasm. The catalysed reaction is L-glutamate + ATP = L-glutamyl 5-phosphate + ADP. It participates in amino-acid biosynthesis; L-proline biosynthesis; L-glutamate 5-semialdehyde from L-glutamate: step 1/2. Its function is as follows. Catalyzes the transfer of a phosphate group to glutamate to form L-glutamate 5-phosphate. The protein is Glutamate 5-kinase of Pseudomonas syringae pv. syringae (strain B728a).